A 1872-amino-acid polypeptide reads, in one-letter code: Plexin-A3 (1872 aa).

The first 19 residues, 1–19, serve as a signal peptide directing secretion; it reads MPTVCLLPLLFFTIGGCLG. In terms of domain architecture, Sema spans 20–489; sequence SSRPFRTFVV…SEKQVSQLPV (470 aa). Topologically, residues 20–1220 are extracellular; that stretch reads SSRPFRTFVV…ITADRALTLP (1201 aa). Asparagine 60 is a glycosylation site (N-linked (GlcNAc...) asparagine). 9 disulfides stabilise this stretch: cysteine 78–cysteine 87, cysteine 113–cysteine 121, cysteine 267–cysteine 388, cysteine 283–cysteine 339, cysteine 357–cysteine 376, cysteine 492–cysteine 509, cysteine 498–cysteine 540, cysteine 501–cysteine 518, and cysteine 512–cysteine 524. An N-linked (GlcNAc...) asparagine glycan is attached at asparagine 549. Cysteine 575 and cysteine 595 form a disulfide bridge. IPT/TIG domains are found at residues 841–934, 936–1021, 1024–1123, and 1126–1212; these read PRIT…YSFV, PTFD…YTYT, PTVT…FTYY, and PSFE…LHIT. A glycan (N-linked (GlcNAc...) asparagine) is linked at asparagine 1163. A helical transmembrane segment spans residues 1221–1241; it reads AMVGLAAGGGLLLLAITVVLV. The stretch at 1240 to 1294 forms a coiled coil; it reads LVAYKRKTQDADRTLKRLQLQMDNLESRVALECKEAFAELQTDINELTNHMDGVQ. At 1242–1872 the chain is on the cytoplasmic side; sequence AYKRKTQDAD…QIITLVSSSS (631 aa). Serine 1597 is modified (phosphoserine).

The protein belongs to the plexin family. Detected in embryonic hindbrain, spinal cord, dorsal root ganglion, trigeminal ganglion and superior cervical ganglion. In newborns, detected throughout all layers of the hippocampus.

It is found in the cell membrane. Its function is as follows. Coreceptor for SEMA3A and SEMA3F. Necessary for signaling by class 3 semaphorins and subsequent remodeling of the cytoskeleton. Plays a role in axon guidance in the developing nervous system. Regulates the migration of sympathetic neurons, but not of neural crest precursors. Required for normal dendrite spine morphology in pyramidal neurons. May play a role in regulating semaphorin-mediated programmed cell death in the developing nervous system. Class 3 semaphorins bind to a complex composed of a neuropilin and a plexin. The plexin modulates the affinity of the complex for specific semaphorins, and its cytoplasmic domain is required for the activation of down-stream signaling events in the cytoplasm. The sequence is that of Plexin-A3 (Plxna3) from Mus musculus (Mouse).